A 102-amino-acid chain; its full sequence is uncharacterized protein (102 aa).

A signal peptide spans 1 to 19 (MFLFCFVLFCSLVFPLARG).

This is an uncharacterized protein from Saccharomyces cerevisiae (strain ATCC 204508 / S288c) (Baker's yeast).